A 274-amino-acid chain; its full sequence is Hydroxyethylthiazole kinase (274 aa).

Met-51 contacts substrate. ATP is bound by residues Arg-127 and Ser-173. Gly-200 contacts substrate.

This sequence belongs to the Thz kinase family. Mg(2+) is required as a cofactor.

It catalyses the reaction 5-(2-hydroxyethyl)-4-methylthiazole + ATP = 4-methyl-5-(2-phosphooxyethyl)-thiazole + ADP + H(+). The protein operates within cofactor biosynthesis; thiamine diphosphate biosynthesis; 4-methyl-5-(2-phosphoethyl)-thiazole from 5-(2-hydroxyethyl)-4-methylthiazole: step 1/1. Its function is as follows. Catalyzes the phosphorylation of the hydroxyl group of 4-methyl-5-beta-hydroxyethylthiazole (THZ). This Photobacterium profundum (strain SS9) protein is Hydroxyethylthiazole kinase.